A 329-amino-acid polypeptide reads, in one-letter code: Basic leucine zipper 61 (329 aa).

Disordered stretches follow at residues 1 to 22 and 98 to 204; these read MAQL…FSSQ and DDVH…HDPK. Positions 10–22 are enriched in polar residues; sequence TMTTPNWPDFSSQ. A compositionally biased stretch (low complexity) spans 119 to 133; sequence PTRSSSNTSTPSDHN. A compositionally biased stretch (basic and acidic residues) spans 139-154; the sequence is DNNKEAPPSDHDHHMD. The segment covering 155–169 has biased composition (low complexity); it reads NNVANQNNAAGNNYN. Positions 202-254 constitute a bZIP domain; sequence DPKRVKRILANRQSAQRSRVRKLQYISELERSVTSLQTEVSVLSPRVAFLDHQ. The tract at residues 204-223 is basic motif; it reads KRVKRILANRQSAQRSRVRK. Residues 230–251 form a leucine-zipper region; it reads LERSVTSLQTEVSVLSPRVAFL. Positions 304–313 are enriched in polar residues; sequence KMENNVSDQS. Residues 304–329 are disordered; the sequence is KMENNVSDQSPADIKPSVEKEQLLNV. Over residues 319-329 the composition is skewed to basic and acidic residues; the sequence is PSVEKEQLLNV.

Forms heterodimers with BZIP18, BZIP43 and VIP1/BZIP51.

Its subcellular location is the nucleus. Its function is as follows. Transcriptional activator. The chain is Basic leucine zipper 61 from Arabidopsis thaliana (Mouse-ear cress).